We begin with the raw amino-acid sequence, 2601 residues long: Centrosomal protein of 295 kDa (2601 aa).

The tract at residues 1 to 560 (MKRKVVNTHK…KKTQPTGVGI (560 aa)) is necessary for centriole targeting and microtubule association. Position 14 is a phosphoserine (S14). Coiled-coil stretches lie at residues 207-273 (KRPD…EDLA) and 500-552 (AARI…KRKK). Phosphoserine is present on residues S654 and S938. Residues 1008–1029 (PSADTKSGKIQEQHSSKSEKGL) form a disordered region. The segment covering 1013-1027 (KSGKIQEQHSSKSEK) has biased composition (basic and acidic residues). Coiled coils occupy residues 1053 to 1082 (LHDS…VELL) and 1498 to 1544 (IQSH…VSSE). Residues 1558–1580 (ADSERTQKSFPTKSNDTLPSSHR) form a disordered region. Polar residues predominate over residues 1565–1577 (KSFPTKSNDTLPS). Phosphoserine is present on S1637. A coiled-coil region spans residues 1728–1758 (QEKLLVQRQTALQQQIQKHEETLKDFFKDSQ). Basic and acidic residues-rich tracts occupy residues 1795 to 1827 (RHAD…DLGR), 1985 to 2003 (FSEH…KEEE), and 2100 to 2112 (DNRD…DSSS). Disordered stretches follow at residues 1795-1834 (RHAD…KPPV), 1979-2004 (LTDP…EEET), and 2085-2117 (HPDF…SHCA). T2473 carries the post-translational modification Phosphothreonine. Residues 2478-2601 (SLQEAFIKRK…LEKLRAKNTC (124 aa)) form an ALMS motif region. Residues 2556–2581 (RLYNQLAEVKQQKEEKTKQEAYAQNR) adopt a coiled-coil conformation.

Interacts (via ALMS motif) with microtubules; this interaction is direct.

The protein localises to the cytoplasm. It localises to the cytoskeleton. Its subcellular location is the microtubule organizing center. The protein resides in the centrosome. It is found in the centriole. The protein localises to the spindle. Its function is as follows. Centriole-enriched microtubule-binding protein involved in centriole biogenesis. Essential for the generation of the distal portion of new-born centrioles in a CPAP- and CEP120-mediated elongation dependent manner during the cell cycle S/G2 phase after formation of the initiating cartwheel structure. Required for the recruitment of centriolar proteins, such as POC1B, POC5 and CEP135, into the distal portion of centrioles. Also required for centriole-to-centrosome conversion during mitotic progression, but is dispensable for cartwheel removal or centriole disengagement. Binds to and stabilizes centriolar microtubule. May be involved in ciliogenesis. The protein is Centrosomal protein of 295 kDa of Homo sapiens (Human).